Reading from the N-terminus, the 315-residue chain is Glycine--tRNA ligase alpha subunit (315 aa).

This sequence belongs to the class-II aminoacyl-tRNA synthetase family. Tetramer of two alpha and two beta subunits.

It is found in the cytoplasm. The enzyme catalyses tRNA(Gly) + glycine + ATP = glycyl-tRNA(Gly) + AMP + diphosphate. This Pseudomonas putida (strain ATCC 47054 / DSM 6125 / CFBP 8728 / NCIMB 11950 / KT2440) protein is Glycine--tRNA ligase alpha subunit.